The sequence spans 360 residues: Phospho-N-acetylmuramoyl-pentapeptide-transferase (360 aa).

Transmembrane regions (helical) follow at residues 27-47 (IVGL…LIAW), 71-91 (TPTM…LLWA), 97-117 (YVWC…IDDY), 132-152 (WKYF…YAIG), 168-188 (VMPQ…VGTS), 199-219 (GLAI…AWAT), 236-256 (AGEL…FLWF), 263-283 (VFMG…IAVL), 288-308 (FLLV…ILQV), and 338-358 (VIVR…ATLK).

It belongs to the glycosyltransferase 4 family. MraY subfamily. Mg(2+) serves as cofactor.

It is found in the cell inner membrane. It carries out the reaction UDP-N-acetyl-alpha-D-muramoyl-L-alanyl-gamma-D-glutamyl-meso-2,6-diaminopimeloyl-D-alanyl-D-alanine + di-trans,octa-cis-undecaprenyl phosphate = di-trans,octa-cis-undecaprenyl diphospho-N-acetyl-alpha-D-muramoyl-L-alanyl-D-glutamyl-meso-2,6-diaminopimeloyl-D-alanyl-D-alanine + UMP. Its pathway is cell wall biogenesis; peptidoglycan biosynthesis. Functionally, catalyzes the initial step of the lipid cycle reactions in the biosynthesis of the cell wall peptidoglycan: transfers peptidoglycan precursor phospho-MurNAc-pentapeptide from UDP-MurNAc-pentapeptide onto the lipid carrier undecaprenyl phosphate, yielding undecaprenyl-pyrophosphoryl-MurNAc-pentapeptide, known as lipid I. The sequence is that of Phospho-N-acetylmuramoyl-pentapeptide-transferase from Proteus mirabilis (strain HI4320).